The following is a 412-amino-acid chain: LL-diaminopimelate aminotransferase (412 aa).

Substrate contacts are provided by Tyr15 and Gly42. Pyridoxal 5'-phosphate-binding positions include Tyr72, 108-109 (SK), Tyr132, Asn187, Tyr218, and 246-248 (SFS). The substrate site is built by Lys109, Tyr132, and Asn187. Lys249 is subject to N6-(pyridoxal phosphate)lysine. 2 residues coordinate pyridoxal 5'-phosphate: Arg257 and Asn292. Substrate contacts are provided by Asn292 and Arg388.

This sequence belongs to the class-I pyridoxal-phosphate-dependent aminotransferase family. LL-diaminopimelate aminotransferase subfamily. In terms of assembly, homodimer. Pyridoxal 5'-phosphate is required as a cofactor.

It catalyses the reaction (2S,6S)-2,6-diaminopimelate + 2-oxoglutarate = (S)-2,3,4,5-tetrahydrodipicolinate + L-glutamate + H2O + H(+). Its pathway is amino-acid biosynthesis; L-lysine biosynthesis via DAP pathway; LL-2,6-diaminopimelate from (S)-tetrahydrodipicolinate (aminotransferase route): step 1/1. Functionally, involved in the synthesis of meso-diaminopimelate (m-DAP or DL-DAP), required for both lysine and peptidoglycan biosynthesis. Catalyzes the direct conversion of tetrahydrodipicolinate to LL-diaminopimelate. The sequence is that of LL-diaminopimelate aminotransferase from Synechocystis sp. (strain ATCC 27184 / PCC 6803 / Kazusa).